The sequence spans 452 residues: MMITLRKLPLAVAVAAGVMSAQAMAVDFHGYARSGIGWTGSGGEQQCFQATGAQSKYRLGNECETYAELKLGQEVWKEGDKSFYFDTNVAYSVNQQNDWESTDPAFREANVQGKNLIEWLPGSTIWAGKRFYQRHDVHMIDFYYWDISGPGAGIENIDLGFGKLSLAATRSTEAGGSYTFSSQNIYDEVKDTANDVFDVRLAGLQTNPDGVLELGVDYGRANTTDGYKLADGASKDGWMFTAEHTQSMLKGYNKFVVQYATDAMTTQGKGQARGSDGSSSFTEELPDGTKINYANKVINNNGNMWRILDHGAISLGDKWDLMYVGMYQNIDWDNNLGTEWWTVGVRPMYKWTPIMSTLLEVGYDNVKSQQTGDRNNQYKITLAQQWQAGDSIWSRPAIRIFATYAKWDEKWGYIKDGDNISRYAAATNSGISTNSRGDSDEWTFGAQMEIWW.

The first 25 residues, 1–25, serve as a signal peptide directing secretion; that stretch reads MMITLRKLPLAVAVAAGVMSAQAMA.

Belongs to the porin LamB (TC 1.B.3) family. As to quaternary structure, homotrimer formed of three 18-stranded antiparallel beta-barrels, containing three independent channels.

It localises to the cell outer membrane. The catalysed reaction is beta-maltose(in) = beta-maltose(out). Its function is as follows. Involved in the transport of maltose and maltodextrins. The chain is Maltoporin from Salmonella agona (strain SL483).